The primary structure comprises 128 residues: Gastrotropin (128 aa).

Residue Ala2 is modified to N-acetylalanine.

The protein belongs to the calycin superfamily. Fatty-acid binding protein (FABP) family. In terms of tissue distribution, predominantly expressed in ileum; also expressed in ovary.

Its subcellular location is the cytoplasm. The protein localises to the membrane. Binds to bile acids and is involved in enterohepatic bile acid metabolism. Required for efficient apical to basolateral transport of conjugated bile acids in ileal enterocytes. Stimulates gastric acid and pepsinogen secretion. This Rattus norvegicus (Rat) protein is Gastrotropin (Fabp6).